The following is a 101-amino-acid chain: Large ribosomal subunit protein P1 (101 aa).

Over residues 61–72 (AAPAAAAAPAAA) the composition is skewed to low complexity. The segment at 61-101 (AAPAAAAAPAAAEEAEEEAEEEEEEEEAEEEAAAGLGALFG) is disordered. Residues 73–92 (EEAEEEAEEEEEEEEAEEEA) are compositionally biased toward acidic residues.

It belongs to the eukaryotic ribosomal protein P1/P2 family. In terms of assembly, part of the 50S ribosomal subunit. Homodimer, it forms part of the ribosomal stalk which helps the ribosome interact with GTP-bound translation factors. Forms a heptameric uL10/P0(P1)2(P1)2(P1)2 complex, where uL10/P0 forms an elongated spine to which the P1 dimers bind in a sequential fashion.

Its function is as follows. Forms part of the ribosomal stalk, playing a central role in the interaction of the ribosome with GTP-bound translation factors. The sequence is that of Large ribosomal subunit protein P1 from Methanothermobacter thermautotrophicus (strain ATCC 29096 / DSM 1053 / JCM 10044 / NBRC 100330 / Delta H) (Methanobacterium thermoautotrophicum).